The following is a 319-amino-acid chain: ATP-dependent 6-phosphofructokinase (319 aa).

Residue G11 coordinates ATP. 21-25 provides a ligand contact to ADP; that stretch reads RAVVR. ATP-binding positions include 72–73 and 102–105; these read RC and GDGS. D103 contacts Mg(2+). Residue 125-127 coordinates substrate; the sequence is TID. The Proton acceptor role is filled by D127. R154 is a binding site for ADP. Residues R162 and 169 to 171 contribute to the substrate site; that span reads MGR. Residues 185 to 187, R211, and 213 to 215 contribute to the ADP site; these read GAE and KKH. Substrate is bound by residues E222, R243, and 249 to 252; that span reads HVQR.

Belongs to the phosphofructokinase type A (PFKA) family. ATP-dependent PFK group I subfamily. Prokaryotic clade 'B1' sub-subfamily. Homotetramer. Requires Mg(2+) as cofactor.

It localises to the cytoplasm. It catalyses the reaction beta-D-fructose 6-phosphate + ATP = beta-D-fructose 1,6-bisphosphate + ADP + H(+). It participates in carbohydrate degradation; glycolysis; D-glyceraldehyde 3-phosphate and glycerone phosphate from D-glucose: step 3/4. Allosterically activated by ADP and other diphosphonucleosides, and allosterically inhibited by phosphoenolpyruvate. Functionally, catalyzes the phosphorylation of D-fructose 6-phosphate to fructose 1,6-bisphosphate by ATP, the first committing step of glycolysis. This Bacillus mycoides (strain KBAB4) (Bacillus weihenstephanensis) protein is ATP-dependent 6-phosphofructokinase.